The chain runs to 89 residues: Cell division topological specificity factor (89 aa).

It belongs to the MinE family.

Its function is as follows. Prevents the cell division inhibition by proteins MinC and MinD at internal division sites while permitting inhibition at polar sites. This ensures cell division at the proper site by restricting the formation of a division septum at the midpoint of the long axis of the cell. The polypeptide is Cell division topological specificity factor (Klebsiella pneumoniae subsp. pneumoniae (strain ATCC 700721 / MGH 78578)).